A 379-amino-acid chain; its full sequence is tRNA-specific 2-thiouridylase MnmA (379 aa).

Residues 6–13 and leucine 32 contribute to the ATP site; that span reads AMSGGVDS. Cysteine 101 functions as the Nucleophile in the catalytic mechanism. Cysteine 101 and cysteine 199 are disulfide-bonded. Glycine 125 contacts ATP. The interval 148–150 is interaction with tRNA; that stretch reads KDQ. Catalysis depends on cysteine 199, which acts as the Cysteine persulfide intermediate.

This sequence belongs to the MnmA/TRMU family.

It is found in the cytoplasm. The enzyme catalyses S-sulfanyl-L-cysteinyl-[protein] + uridine(34) in tRNA + AH2 + ATP = 2-thiouridine(34) in tRNA + L-cysteinyl-[protein] + A + AMP + diphosphate + H(+). Its function is as follows. Catalyzes the 2-thiolation of uridine at the wobble position (U34) of tRNA, leading to the formation of s(2)U34. The chain is tRNA-specific 2-thiouridylase MnmA from Arthrobacter sp. (strain FB24).